Here is a 348-residue protein sequence, read N- to C-terminus: WW domain binding protein 1-like (348 aa).

The chain crosses the membrane as a helical span at residues 42–62 (LWWFWLVWTVVIILSCCCVCH). Disordered stretches follow at residues 111-253 (VVNR…RRFT) and 306-348 (CLSS…GSPS). The segment covering 134–155 (LPPPPQGGPPGGSPPGADPPPQ) has biased composition (pro residues). A compositionally biased stretch (low complexity) spans 156–177 (GSQGAQSSPLSGPSRSSTRPPS). Ser-177 carries the phosphoserine modification. Residues 220 to 234 (SECKEELLKDSRSER) are compositionally biased toward basic and acidic residues. The span at 331-348 (NTINEQDSPNSQHSGSPS) shows a compositional bias: polar residues.

It is found in the membrane. This Mus musculus (Mouse) protein is WW domain binding protein 1-like (Wbp1l).